The sequence spans 295 residues: Taste receptor type 2 member 120 (295 aa).

The Extracellular portion of the chain corresponds to 1–5; it reads MNLVE. Residues 6-26 traverse the membrane as a helical segment; that stretch reads WIVTIIMMTEFLLGNCANVFI. Topologically, residues 27 to 45 are cytoplasmic; sequence TIVNFIDCVKRRKISSADR. The chain crosses the membrane as a helical span at residues 46 to 66; it reads IITAIAIFRIGLLWAMLTNWH. Residues 67–80 lie on the Extracellular side of the membrane; that stretch reads SHVFTPDTDNLQMR. The helical transmembrane segment at 81-101 threads the bilayer; it reads VFGGITWAITNHFTTWLGTIL. Over 102 to 127 the chain is Cytoplasmic; the sequence is SMFYLFKIANFSNSLFLHLKRKLDNV. The chain crosses the membrane as a helical span at residues 128-148; the sequence is LLVIFLGSSLFLVAYLGMVNI. Over 149–177 the chain is Extracellular; the sequence is KKIAWMSIHEGNVTTKSKLKHVTSITNML. N160 is a glycosylation site (N-linked (GlcNAc...) asparagine). A helical membrane pass occupies residues 178–198; that stretch reads LFSLINIVPFGISLNCVLLLI. Residues 199-228 are Cytoplasmic-facing; it reads YSLSKHLKNMKFYGKGCQDQSTMVHIKALQ. The chain crosses the membrane as a helical span at residues 229-249; the sequence is TVVSFLLLYATYSSCVIISGW. The Extracellular segment spans residues 250–255; the sequence is SLQNAP. The chain crosses the membrane as a helical span at residues 256–276; it reads VFLFCVTIGSFYPAGHSCILI. The Cytoplasmic segment spans residues 277–295; it reads WGNQKLKQVFLLLLRQMRC.

Belongs to the G-protein coupled receptor T2R family.

The protein localises to the membrane. In terms of biological role, putative taste receptor which may play a role in the perception of bitterness. This chain is Taste receptor type 2 member 120, found in Mus musculus (Mouse).